Reading from the N-terminus, the 1528-residue chain is MGIPKFFRYISERWPMILQLIEGTQIPEFDNLYLDMNSILHNCTHGNDDDVTKRLTEEEVFAKICTYIDHLFQTIKPKKIFYMAIDGVAPRAKMNQQRARRFRTAMDAEKALKKAIENGDEIPKGEPFDSNSITPGTEFMAKLTKNLQYFIHDKISNDSKWREVQIIFSGHEVPGEGEHKIMNFIRHLKSQKDFNQNTRHCIYGLDADLIMLGLSTHGPHFALLREEVTFGRRNSEKKSLEHQNFYLLHLSLLREYMELEFKEIADEMQFEYNFERILDDFILVMFVIGNDFLPNLPDLHLNKGAFPVLLQTFKEALLHTDGYINEHGKINLKRLGVWLNYLSQFELLNFEKDDIDVEWFNKQLENISLEGERKRQRVGKKLLVKQQKKLIGSIKPWLMEQLQEKLSPDLPDEEIPTLELPKDLDMKDHLEFLKEFAFDLGLFITHSKSKGSYSLKMDLDSINPDETEEEFQNRVNSIRKTIKKYQNAIIVEDKEELETEKTIYNERFERWKHEYYHDKLKFTTDSEEKVRDLAKDYVEGLQWVLYYYYRGCPSWSWYYPHHYAPRISDLAKGLDQDIEFDLSKPFTPFQQLMAVLPERSKNLIPPAFRPLMYDEQSPIHDFYPAEVQLDKNGKTADWEAVVLISFVDEKRLIEAMQPYLRKLSPEEKTRNQFGKDLIYSFNPQVDNLYKSPLGGIFSDIEHNHCVEKEYITIPLDSSEIRYGLLPNAKLGAEMLAGFPTLLSLPFTSSLEYNETMVFQQPSKQQSMVLQITDIYKTNNVTLEDFSKRHLNKVIYTRWPYLRESKLVSLTDGKTIYEYQESNDKKKFGFITKPAETQDKKLFNSLKNSMLRMYAKQKAVKIGPMEAIATVFPVTGLVRDSDGGYIKTFSPTPDYYPLQLVVESVVNEDERYKERGPIPIEEEFPLNSKVIFLGDYAYGGETTIDGYSSDRRLKITVEKKFLDSEPTIGKERLQMDHQAVKYYPSYIVSKNMHLHPLFLSKITSKFMITDATGKHINVGIPVKFEARHQKVLGYARRNPRGWEYSNLTLNLLKEYRQTFPDFFFRLSKVGNDIPVLEDLFPDTSTKDAMNLLDGIKQWLKYVSSKFIAVSLESDSLTKTSIAAVEDHIMKYAANIEGHERKQLAKVPREAVLNPRSSFALLRSQKFDLGDRVVYIQDSGKVPIFSKGTVVGYTTLSSSLSIQVLFDHEIVAGNNFGGRLRTNRGLGLDASFLLNITNRQFIYHSKASKKALEKKKQSNNRNNNTKTAHKTPSKQQSEEKLRKERAHDLLNFIKKDTNEKNSESVDNKSMGSQKDSKPAKKVLLKRPAQKSSENVQVDLANFEKAPLDNPTVAGSIFNAVANQYSDGIGSNLNIPTPPHPMNVVGGPIPGANDVADVGLPYNIPPGFMTHPNGLHPLHPHQMPYPNMNGMSIPPPAPHGFGQPISFPPPPPMTNVSDQGSRIVVNEKESQDLKKFINGKQHSNGSTIGGETKNSRKGEIKPSSGTNSTECQSPKSQSNAADRDNKKDEST.

Disordered stretches follow at residues 1246–1331, 1431–1455, and 1470–1528; these read SKKA…KSSE, PPPAPHGFGQPISFPPPPPMTNVSD, and LKKF…DEST. Positions 1274-1304 are enriched in basic and acidic residues; sequence QSEEKLRKERAHDLLNFIKKDTNEKNSESVD. The span at 1317 to 1326 shows a compositional bias: basic residues; the sequence is AKKVLLKRPA. Residues 1500-1517 show a composition bias toward polar residues; sequence SSGTNSTECQSPKSQSNA. At Thr1506 the chain carries Phosphothreonine. Ser1510 carries the phosphoserine modification. Basic and acidic residues predominate over residues 1518-1528; the sequence is ADRDNKKDEST.

It belongs to the 5'-3' exonuclease family. It depends on Mg(2+) as a cofactor.

The protein localises to the cytoplasm. It is found in the perinuclear region. Its subcellular location is the P-body. With respect to regulation, 3'-phosphoadenosine 5'-phosphate (pAp) is an inhibitor of KEM1. Sodium-induced GCN4 expression reduces pAp accumulation by activating HAL2 expression, and therefore maintains mRNA degradation capacity which is likely to be important for the accurate and rapid adaptation of gene expression to salt stress. In terms of biological role, multifunctional protein that exhibits several independent functions at different levels of the cellular processes. 5'-3' exonuclease component of the nonsense-mediated mRNA decay (NMD) which is a highly conserved mRNA degradation pathway, an RNA surveillance system whose role is to identify and rid cells of mRNA with premature termination codons and thus prevents accumulation of potentially harmful truncated proteins. The NMD pathway has a second role regulating the decay of wild-type mRNAs, and especially mRNAs that are important for telomere functions. Participate in CTH2-mediated and VTS1-mediated mRNA turnover. Involved in the degradation of several hypomodified mature tRNA species and participates in the 5'-processing or the degradation of the snoRNA precursors and rRNA processing. Involved in defense against virus and suppresses viral RNA recombination by rapidly removing the 5'-truncated RNAs, the substrates of recombination, and thus reducing the chance for recombination to occur in the parental strain. Required for the assembly of the virus-like particles of the Ty3 retrotransposon and contributes to the efficient generation of narnavirus 20S RNA by playing a major role in the elimination of the non-viral upstream sequences from the primary transcripts. Degrades single-stranded DNA (ss-DNA) and can renature complementary ss-DNA as well as catalyzes the formation of heteroduplex DNA from circular ss-DNA and homologous linear ds-DNA in vitro. Acts as a microtubule-associated protein which interacts with cytoplasmic microtubules through beta-tubulin and promotes in vitro assembly of tubulin into microtubules. Associates with microtubule functions such as chromosome transmission, nuclear migration, and SPB duplication. Has also a role in G1 to S transition and is involved in nuclear fusion during karyogamy. Required for the expression of ROK1 at the post-transcriptional level and for the alpha-factor induction of the karyogamy genes KAR3 and KAR4. Plays a role in filamentous growth. In Saccharomyces cerevisiae (strain ATCC 204508 / S288c) (Baker's yeast), this protein is 5'-3' exoribonuclease 1 (XRN1).